The primary structure comprises 820 residues: Penicillin-binding protein 1A (820 aa).

The segment at 1–120 (MNSDGRHHQS…PAGRLPQPRV (120 aa)) is disordered. Over residues 41–53 (TDDRSAPHADSIE) the composition is skewed to basic and acidic residues. The chain crosses the membrane as a helical span at residues 139-159 (LTAAVVILLPMVTFTMAYLIV). The transglycosylase stretch occupies residues 180 to 360 (GSEIAKIVPP…RWNWVLDGMV (181 aa)). The active-site Proton donor; for transglycosylase activity is the Glu-213. The transpeptidase stretch occupies residues 453 to 743 (AVVSIDPHNG…PSDIWKATMD (291 aa)). The Acyl-ester intermediate; for transpeptidase activity role is filled by Ser-487. Positions 792–804 (ITIPIGPPTTITL) are enriched in low complexity. Positions 792 to 820 (ITIPIGPPTTITLAPPPPAPPAATPTPPP) are disordered. Positions 805–820 (APPPPAPPAATPTPPP) are enriched in pro residues.

This sequence in the N-terminal section; belongs to the glycosyltransferase 51 family. The protein in the C-terminal section; belongs to the transpeptidase family. Interacts with RipA via its transpeptidase domain (residues 561-820).

It is found in the cell membrane. The catalysed reaction is [GlcNAc-(1-&gt;4)-Mur2Ac(oyl-L-Ala-gamma-D-Glu-L-Lys-D-Ala-D-Ala)](n)-di-trans,octa-cis-undecaprenyl diphosphate + beta-D-GlcNAc-(1-&gt;4)-Mur2Ac(oyl-L-Ala-gamma-D-Glu-L-Lys-D-Ala-D-Ala)-di-trans,octa-cis-undecaprenyl diphosphate = [GlcNAc-(1-&gt;4)-Mur2Ac(oyl-L-Ala-gamma-D-Glu-L-Lys-D-Ala-D-Ala)](n+1)-di-trans,octa-cis-undecaprenyl diphosphate + di-trans,octa-cis-undecaprenyl diphosphate + H(+). It catalyses the reaction Preferential cleavage: (Ac)2-L-Lys-D-Ala-|-D-Ala. Also transpeptidation of peptidyl-alanyl moieties that are N-acyl substituents of D-alanine.. The protein operates within cell wall biogenesis; peptidoglycan biosynthesis. Cell wall formation. Synthesis of cross-linked peptidoglycan from the lipid intermediates. The enzyme has a penicillin-insensitive transglycosylase N-terminal domain (formation of linear glycan strands) and a penicillin-sensitive transpeptidase C-terminal domain (cross-linking of the peptide subunits). Has little peptidoglycan hydrolytic activity; however it inhibits the synergistic peptidoglycan hydrolysis of RipA plus RpfB. This is Penicillin-binding protein 1A (ponA1) from Mycobacterium tuberculosis (strain ATCC 25618 / H37Rv).